The primary structure comprises 286 residues: MASGKEIKGKIGSIKNTQKITSAMEMVAASKMKKAQDRMTASRPYAENIRNVIGHLANANLEYRHPYLEDREVKRVGYIVISTDRGLCGGLNTNEFKKVTKDAKKWQEQGVEVDFAALGSKSCAFFNRFGGNMLAAESGLGDAPSVKDVIGLVRIMLNAFNEGKIDRLYLVFNKFVNTMAQEPLIDQLLPLPKSEDKALKHRWDYIYEPDPKPILDTLLVRYIESQVYQGVVENAASEQAARMVAMKAATDNAGDLIDDLQLIYNKARQAAITQEISEIVSGAAAV.

Belongs to the ATPase gamma chain family. In terms of assembly, F-type ATPases have 2 components, CF(1) - the catalytic core - and CF(0) - the membrane proton channel. CF(1) has five subunits: alpha(3), beta(3), gamma(1), delta(1), epsilon(1). CF(0) has three main subunits: a, b and c.

It localises to the cell inner membrane. In terms of biological role, produces ATP from ADP in the presence of a proton gradient across the membrane. The gamma chain is believed to be important in regulating ATPase activity and the flow of protons through the CF(0) complex. This is ATP synthase gamma chain from Pseudoalteromonas atlantica (strain T6c / ATCC BAA-1087).